Consider the following 36-residue polypeptide: Conotoxin Cal6.1h (36 aa).

Residues 1 to 7 constitute a propeptide that is removed on maturation; it reads GLGRPSR. Disulfide bonds link Cys-9–Cys-25, Cys-16–Cys-29, and Cys-24–Cys-34.

Belongs to the conotoxin O1 superfamily. In terms of tissue distribution, expressed by the venom duct.

Its subcellular location is the secreted. Probable neurotoxin with unknown target. Possibly targets ion channels. In Californiconus californicus (California cone), this protein is Conotoxin Cal6.1h.